The chain runs to 107 residues: ATP-dependent Clp protease adapter protein ClpS (107 aa).

The segment at 1 to 20 is disordered; sequence MAQKHEHDTSVITESAPKQK.

It belongs to the ClpS family. Binds to the N-terminal domain of the chaperone ClpA.

Involved in the modulation of the specificity of the ClpAP-mediated ATP-dependent protein degradation. The protein is ATP-dependent Clp protease adapter protein ClpS of Myxococcus xanthus (strain DK1622).